A 931-amino-acid chain; its full sequence is Protein unc-45 homolog B (931 aa).

TPR repeat units follow at residues 6-39, 43-76, and 77-110; these read AVQL…TKDK, ATLY…NSSD, and IKAL…EPRN. ARM repeat units lie at residues 169 to 208, 211 to 250, and 751 to 790; these read EAGA…GMCS, QARA…AIID, and DKLR…NMVL.

In terms of assembly, interacts with HSP90 in an ATP-independent manner. Interacts with UBE4B; the interaction may target UNC45B for proteasomal degradation. In terms of tissue distribution, expressed in eye lens tissues. Expressed in muscle (at protein level).

The protein localises to the cytoplasm. It localises to the myofibril. It is found in the sarcomere. The protein resides in the z line. Its subcellular location is the a band. The protein localises to the perinuclear region. It localises to the cytosol. Functionally, acts as a co-chaperone for HSP90 and is required for proper folding of the myosin motor domain. Plays a role in sarcomere formation during muscle cell development. Is necessary for normal early lens development. The polypeptide is Protein unc-45 homolog B (Homo sapiens (Human)).